Here is a 557-residue protein sequence, read N- to C-terminus: Membrane protein insertase YidC (557 aa).

The chain crosses the membrane as a helical span at residues 1–21 (MNWLRNSLIAAILVITYVLFI). Residues 52 to 71 (SDDAVASSATEESDVPEVSV) form a disordered region. Transmembrane regions (helical) follow at residues 346 to 366 (TIDY…LDFI), 369 to 389 (LVGN…AVFF), 439 to 459 (FGGC…YWMI), 470 to 490 (FFLW…PLLM), and 517 to 537 (PIGF…YWVV).

The protein belongs to the OXA1/ALB3/YidC family. Type 1 subfamily. Interacts with the Sec translocase complex via SecD. Specifically interacts with transmembrane segments of nascent integral membrane proteins during membrane integration.

It is found in the cell inner membrane. In terms of biological role, required for the insertion and/or proper folding and/or complex formation of integral membrane proteins into the membrane. Involved in integration of membrane proteins that insert both dependently and independently of the Sec translocase complex, as well as at least some lipoproteins. Aids folding of multispanning membrane proteins. The polypeptide is Membrane protein insertase YidC (Saccharophagus degradans (strain 2-40 / ATCC 43961 / DSM 17024)).